The primary structure comprises 556 residues: Carotenoid-cleaving dioxygenase, mitochondrial (556 aa).

H203, H263, H334, and H550 together coordinate Fe cation.

Belongs to the carotenoid oxygenase family. Requires Fe(2+) as cofactor.

It is found in the mitochondrion. It carries out the reaction all-trans-beta-carotene + O2 = beta-ionone + all-trans-10'-apo-beta-carotenal. It catalyses the reaction 5-cis-lycopene + O2 = 5-cis-10'-apo-lycopenal + (3E,5E)-6,10-dimethylundeca-3,5,9-trien-2-one. The enzyme catalyses 13-cis-lycopene + O2 = 13-cis-10'-apo-lycopenal + (3E,5E)-6,10-dimethylundeca-3,5,9-trien-2-one. The catalysed reaction is lutein + O2 = (3R,6R)-hydroxy-alpha-ionone + (3R)-3-hydroxy-10'-apo-beta-carotenal. It carries out the reaction lutein + O2 = (3R,6R)-3-hydroxy-10'-apo-alpha-carotenal + (3R)-hydroxy-beta-ionone. It catalyses the reaction all-trans-zeaxanthin + 2 O2 = 4,9-dimethyldodeca-2,4,6,8,10-pentaenedial + 2 (3R)-hydroxy-beta-ionone. The enzyme catalyses all-trans-zeaxanthin + O2 = (3R)-3-hydroxy-10'-apo-beta-carotenal + (3R)-hydroxy-beta-ionone. The catalysed reaction is beta-cryptoxanthin + O2 = all-trans-10'-apo-beta-carotenal + (3R)-hydroxy-beta-ionone. It carries out the reaction all-trans-10'-apo-beta-carotenal + O2 = beta-ionone + 4,9-dimethyldodeca-2,4,6,8,10-pentaenedial. It catalyses the reaction (3R)-3-hydroxy-10'-apo-beta-carotenal + O2 = 4,9-dimethyldodeca-2,4,6,8,10-pentaenedial + (3R)-hydroxy-beta-ionone. The enzyme catalyses (3R,6R)-3-hydroxy-10'-apo-alpha-carotenal + O2 = (3R,6R)-hydroxy-alpha-ionone + 4,9-dimethyldodeca-2,4,6,8,10-pentaenedial. Broad specificity mitochondrial dioxygenase that mediates the asymmetric oxidative cleavage of carotenoids. Cleaves carotenes (pure hydrocarbon carotenoids) such as all-trans-beta-carotene and lycopene as well as xanthophylls (oxygenated carotenoids) such as zeaxanthin, lutein and beta-cryptoxanthin at both the 9,10 and the 9',10' carbon-carbon double bond. Through its function in carotenoids metabolism regulates oxidative stress and the production of important signaling molecules. The sequence is that of Carotenoid-cleaving dioxygenase, mitochondrial from Macaca fascicularis (Crab-eating macaque).